A 464-amino-acid polypeptide reads, in one-letter code: Cysteine--tRNA ligase (464 aa).

Residue Cys-29 coordinates Zn(2+). Positions Ala-31 to His-41 match the 'HIGH' region motif. 3 residues coordinate Zn(2+): Cys-207, His-232, and Glu-236. Positions Lys-263–Ser-267 match the 'KMSKS' region motif. Position 266 (Lys-266) interacts with ATP.

The protein belongs to the class-I aminoacyl-tRNA synthetase family. As to quaternary structure, monomer. It depends on Zn(2+) as a cofactor.

It is found in the cytoplasm. The enzyme catalyses tRNA(Cys) + L-cysteine + ATP = L-cysteinyl-tRNA(Cys) + AMP + diphosphate. In Rhodococcus jostii (strain RHA1), this protein is Cysteine--tRNA ligase.